We begin with the raw amino-acid sequence, 433 residues long: Glutamate-1-semialdehyde 2,1-aminomutase (433 aa).

At Lys-273 the chain carries N6-(pyridoxal phosphate)lysine.

The protein belongs to the class-III pyridoxal-phosphate-dependent aminotransferase family. HemL subfamily. As to quaternary structure, homodimer. Pyridoxal 5'-phosphate is required as a cofactor.

It localises to the cytoplasm. It carries out the reaction (S)-4-amino-5-oxopentanoate = 5-aminolevulinate. Its pathway is porphyrin-containing compound metabolism; protoporphyrin-IX biosynthesis; 5-aminolevulinate from L-glutamyl-tRNA(Glu): step 2/2. This Ralstonia nicotianae (strain ATCC BAA-1114 / GMI1000) (Ralstonia solanacearum) protein is Glutamate-1-semialdehyde 2,1-aminomutase.